The sequence spans 415 residues: Exodeoxyribonuclease 7 large subunit (415 aa).

This sequence belongs to the XseA family. In terms of assembly, heterooligomer composed of large and small subunits.

It localises to the cytoplasm. The enzyme catalyses Exonucleolytic cleavage in either 5'- to 3'- or 3'- to 5'-direction to yield nucleoside 5'-phosphates.. In terms of biological role, bidirectionally degrades single-stranded DNA into large acid-insoluble oligonucleotides, which are then degraded further into small acid-soluble oligonucleotides. This Mycobacterium bovis (strain ATCC BAA-935 / AF2122/97) protein is Exodeoxyribonuclease 7 large subunit.